The chain runs to 228 residues: Translation initiation factor 6 (228 aa).

The protein belongs to the eIF-6 family.

Its function is as follows. Binds to the 50S ribosomal subunit and prevents its association with the 30S ribosomal subunit to form the 70S initiation complex. The polypeptide is Translation initiation factor 6 (Thermococcus gammatolerans (strain DSM 15229 / JCM 11827 / EJ3)).